Reading from the N-terminus, the 447-residue chain is Chromosomal replication initiator protein DnaA (447 aa).

Residues 1–70 are domain I, interacts with DnaA modulators; the sequence is MQDFWSKAMD…EEILSEQLGE (70 aa). The domain II stretch occupies residues 70-110; the sequence is EPVTLLFAADPALEKPVASKTQTVTPVQSGGETGDQENFHS. The tract at residues 87-109 is disordered; sequence ASKTQTVTPVQSGGETGDQENFH. Residues 88-99 show a composition bias toward polar residues; the sequence is SKTQTVTPVQSG. The segment at 111–327 is domain III, AAA+ region; that stretch reads GLDPRYTFDS…GALIRVSAYA (217 aa). 4 residues coordinate ATP: G155, G157, K158, and T159. The interval 328-447 is domain IV, binds dsDNA; the sequence is SLTGKPITMA…LASLKSMLQK (120 aa).

The protein belongs to the DnaA family. As to quaternary structure, oligomerizes as a right-handed, spiral filament on DNA at oriC.

It is found in the cytoplasm. Plays an essential role in the initiation and regulation of chromosomal replication. ATP-DnaA binds to the origin of replication (oriC) to initiate formation of the DNA replication initiation complex once per cell cycle. Binds the DnaA box (a 9 base pair repeat at the origin) and separates the double-stranded (ds)DNA. Forms a right-handed helical filament on oriC DNA; dsDNA binds to the exterior of the filament while single-stranded (ss)DNA is stabiized in the filament's interior. The ATP-DnaA-oriC complex binds and stabilizes one strand of the AT-rich DNA unwinding element (DUE), permitting loading of DNA polymerase. After initiation quickly degrades to an ADP-DnaA complex that is not apt for DNA replication. Binds acidic phospholipids. The polypeptide is Chromosomal replication initiator protein DnaA (Magnetococcus marinus (strain ATCC BAA-1437 / JCM 17883 / MC-1)).